Here is a 37-residue protein sequence, read N- to C-terminus: Mu-thomitoxin-Hme1a (37 aa).

3 disulfide bridges follow: Cys-2/Cys-18, Cys-9/Cys-22, and Cys-17/Cys-33. Position 37 is a phenylalanine amide (Phe-37).

Belongs to the neurotoxin 01 (U2-agtx) family. In terms of processing, contains 3 disulfide bonds. Expressed by the venom gland.

The protein resides in the secreted. Its function is as follows. Blocks the Nav1.2/SCN2A, Nav1.4/SCN4A, and Nav1.6/SCN8A sodium channels. Reduces the peak amplitude of the sodium current and negatively shifts the steady-state inactivation process. Does not shift the threshold potential of activation or the voltage corresponding to maximal current. Does not change the reversal potential of the sodium current. May act on site 1 of the receptor. The chain is Mu-thomitoxin-Hme1a from Heriaeus mellotteei (Crab spider).